Here is a 112-residue protein sequence, read N- to C-terminus: MNSSPGPAIALFLMFGGINGDSVVQTEGQVLPSEGDSLIVNCSYETTQYPSLFWYVQYPGEGPQLHLKAMKANDKGRNKGFEAMYRKETTSFHLEKDSVQESDSAVYFCALS.

The N-terminal stretch at 1-20 (MNSSPGPAIALFLMFGGING) is a signal peptide. The Ig-like domain maps to 21 to 112 (DSVVQTEGQV…DSAVYFCALS (92 aa)). N-linked (GlcNAc...) asparagine glycosylation occurs at Asn41. Cys42 and Cys109 are oxidised to a cystine.

As to quaternary structure, alpha-beta TR is a heterodimer composed of an alpha and beta chain; disulfide-linked. The alpha-beta TR is associated with the transmembrane signaling CD3 coreceptor proteins to form the TR-CD3 (TcR or TCR). The assembly of alpha-beta TR heterodimers with CD3 occurs in the endoplasmic reticulum where a single alpha-beta TR heterodimer associates with one CD3D-CD3E heterodimer, one CD3G-CD3E heterodimer and one CD247 homodimer forming a stable octameric structure. CD3D-CD3E and CD3G-CD3E heterodimers preferentially associate with TR alpha and TR beta chains, respectively. The association of the CD247 homodimer is the last step of TcR assembly in the endoplasmic reticulum and is required for transport to the cell surface.

It localises to the cell membrane. V region of the variable domain of T cell receptor (TR) alpha chain that participates in the antigen recognition. Alpha-beta T cell receptors are antigen specific receptors which are essential to the immune response and are present on the cell surface of T lymphocytes. Recognize peptide-major histocompatibility (MH) (pMH) complexes that are displayed by antigen presenting cells (APC), a prerequisite for efficient T cell adaptive immunity against pathogens. Binding of alpha-beta TR to pMH complex initiates TR-CD3 clustering on the cell surface and intracellular activation of LCK that phosphorylates the ITAM motifs of CD3G, CD3D, CD3E and CD247 enabling the recruitment of ZAP70. In turn ZAP70 phosphorylates LAT, which recruits numerous signaling molecules to form the LAT signalosome. The LAT signalosome propagates signal branching to three major signaling pathways, the calcium, the mitogen-activated protein kinase (MAPK) kinase and the nuclear factor NF-kappa-B (NF-kB) pathways, leading to the mobilization of transcription factors that are critical for gene expression and essential for T cell growth and differentiation. The T cell repertoire is generated in the thymus, by V-(D)-J rearrangement. This repertoire is then shaped by intrathymic selection events to generate a peripheral T cell pool of self-MH restricted, non-autoaggressive T cells. Post-thymic interaction of alpha-beta TR with the pMH complexes shapes TR structural and functional avidity. The protein is T cell receptor alpha variable 9-1 of Homo sapiens (Human).